The sequence spans 144 residues: Large ribosomal subunit protein uL13 (144 aa).

The protein belongs to the universal ribosomal protein uL13 family. Part of the 50S ribosomal subunit.

Functionally, this protein is one of the early assembly proteins of the 50S ribosomal subunit, although it is not seen to bind rRNA by itself. It is important during the early stages of 50S assembly. The chain is Large ribosomal subunit protein uL13 from Natronomonas pharaonis (strain ATCC 35678 / DSM 2160 / CIP 103997 / JCM 8858 / NBRC 14720 / NCIMB 2260 / Gabara) (Halobacterium pharaonis).